Consider the following 307-residue polypeptide: MDIETFLAGERAAGGYRCGFVAIVGRPNVGKSTLMNHLIGQKISITSKKAQTTRNRVTGIYTDDTAQFVFVDTPGFQTDHRNALNDRLNQNVTEALGGVDVVVFVVEAMRFTDADRVVLKQLPKHTPVILVVNKIDKDKAKDRYALEAFVAQVRAEFEFAAAEAVSAKHGLRIANLLELLKPYLPESVPMYPEDMVTDKSARFLAMEIVREKLFRYLGEELPYAMNVEVEQFEEEDGLNRIYIAVLVDKESQKAILIGKGGERLKKISTEARLDMEKLFDTKVFLKVWVKVKSGWADDIRFLRELGL.

The Era-type G domain occupies 17–186 (RCGFVAIVGR…LELLKPYLPE (170 aa)). Positions 25 to 32 (GRPNVGKS) are G1. GTP is bound at residue 25 to 32 (GRPNVGKS). The G2 stretch occupies residues 51–55 (QTTRN). The tract at residues 72-75 (DTPG) is G3. GTP-binding positions include 72 to 76 (DTPGF) and 133 to 136 (NKID). Residues 133 to 136 (NKID) are G4. Residues 165–167 (VSA) form a G5 region. Residues 217-293 (LGEELPYAMN…FLKVWVKVKS (77 aa)) form the KH type-2 domain.

It belongs to the TRAFAC class TrmE-Era-EngA-EngB-Septin-like GTPase superfamily. Era GTPase family. Monomer.

The protein localises to the cytoplasm. Its subcellular location is the cell inner membrane. Its function is as follows. An essential GTPase that binds both GDP and GTP, with rapid nucleotide exchange. Plays a role in 16S rRNA processing and 30S ribosomal subunit biogenesis and possibly also in cell cycle regulation and energy metabolism. The sequence is that of GTPase Era from Neisseria meningitidis serogroup C / serotype 2a (strain ATCC 700532 / DSM 15464 / FAM18).